Here is a 250-residue protein sequence, read N- to C-terminus: 3alpha-hydroxysteroid dehydrogenase (250 aa).

Positions 93, 158, and 162 each coordinate NADP(+). The active-site Proton acceptor is the Y158.

The protein belongs to the short-chain dehydrogenases/reductases (SDR) family.

The catalysed reaction is lithocholate + NADP(+) = 3-oxo-5beta-cholan-24-oate + NADPH + H(+). It carries out the reaction deoxycholate + NADP(+) = 12alpha-hydroxy-3-oxo-5beta-cholan-24-oate + NADPH + H(+). The enzyme catalyses deoxycholate + NAD(+) = 12alpha-hydroxy-3-oxo-5beta-cholan-24-oate + NADH + H(+). It catalyses the reaction cholate + NADP(+) = 7alpha,12alpha-dihydroxy-3-oxo-5beta-cholan-24-oate + NADPH + H(+). The catalysed reaction is chenodeoxycholate + NADP(+) = 3-oxochenodeoxycholate + NADPH + H(+). Its function is as follows. Involved in the modification of secondary bile acids into iso-bile acids (3beta-bile acids) via epimerization of the 3-OH group through a 3-oxo-intermediate. Catalyzes the oxidation of deoxycholate (DCA) and lithocholate (LCA) to yield 12-alpha-hydroxy-3-oxo-5-beta-cholan-24-oate (3-oxo-DCA) and 3-oxo-5-beta-cholan-24-oate (3-oxo-LCA), respectively. Is also able to catalyze the oxidation of cholate (CA) and chenodeoxycholate (CDCA) into 3-dehydrocholate (3-oxo-CA) and 7-alpha-hydroxy-3-oxo-5-beta-cholan-24-oate (3-oxo-CDCA), respectively. Can also catalyze the reverse reactions in vitro. Accepts both NADPH and NADH as cosubstrates. The conversion of the abundant bile acid DCA into isoDCA by the gut bacterium R.gnavus favors the growth of the keystone commensal genus Bacteroides, since isoDCA is less cytotoxic than its parent compound, DCA; iso-bile acids have thus a potential role in modulating gut community composition. This chain is 3alpha-hydroxysteroid dehydrogenase, found in Mediterraneibacter gnavus (strain ATCC 29149 / DSM 114966 / JCM 6515 / VPI C7-9) (Ruminococcus gnavus).